The following is a 574-amino-acid chain: Membrane protein insertase YidC (574 aa).

A helical membrane pass occupies residues 6–26 (VFLIFAWLMVAALLWMEWGKE). Positions 65 to 85 (QAGAPGKVPATSTTTATPAAA) are disordered. 5 consecutive transmembrane segments (helical) span residues 350 to 370 (VIDY…FWVL), 376 to 396 (FLHN…LVLY), 447 to 467 (GGCL…WVLV), 491 to 511 (FILP…TPTP), and 525 to 545 (PLVF…YWVV).

The protein belongs to the OXA1/ALB3/YidC family. Type 1 subfamily. In terms of assembly, interacts with the Sec translocase complex via SecD. Specifically interacts with transmembrane segments of nascent integral membrane proteins during membrane integration.

It localises to the cell inner membrane. Functionally, required for the insertion and/or proper folding and/or complex formation of integral membrane proteins into the membrane. Involved in integration of membrane proteins that insert both dependently and independently of the Sec translocase complex, as well as at least some lipoproteins. Aids folding of multispanning membrane proteins. The chain is Membrane protein insertase YidC from Xanthomonas oryzae pv. oryzae (strain PXO99A).